The chain runs to 530 residues: UDP-glucuronosyltransferase 2B15 (530 aa).

A signal peptide spans Met-1–Cys-23. Residue Asn-65 is glycosylated (N-linked (GlcNAc...) asparagine). Lys-136 bears the N6-succinyllysine mark. Residues Asn-316 and Asn-483 are each glycosylated (N-linked (GlcNAc...) asparagine). Residues Ile-495–Phe-515 traverse the membrane as a helical segment.

It belongs to the UDP-glycosyltransferase family. In terms of tissue distribution, expressed in many tissues. Present in liver, prostate and testis.

The protein resides in the endoplasmic reticulum membrane. The catalysed reaction is glucuronate acceptor + UDP-alpha-D-glucuronate = acceptor beta-D-glucuronoside + UDP + H(+). It carries out the reaction 17alpha-estradiol + UDP-alpha-D-glucuronate = 17alpha-estradiol 3-O-(beta-D-glucuronate) + UDP + H(+). It catalyses the reaction 16alpha,17alpha-estriol + UDP-alpha-D-glucuronate = 16alpha,17alpha-estriol 3-O-(beta-D-glucuronate) + UDP + H(+). The enzyme catalyses 17beta-hydroxy-5alpha-androstan-3-one + UDP-alpha-D-glucuronate = 5alpha-dihydrotestosterone 17-O-(beta-D-glucuronate) + UDP + H(+). Its function is as follows. UDP-glucuronosyltransferase (UGT) that catalyzes phase II biotransformation reactions in which lipophilic substrates are conjugated with glucuronic acid to increase the metabolite's water solubility, thereby facilitating excretion into either the urine or bile. Essential for the elimination and detoxification of drugs, xenobiotics and endogenous compounds. Catalyzes the glucuronidation of endogenous steroid hormones such as androgens (testosterone, androsterone) and estrogens (estradiol, epiestradiol, estriol, catechol estrogens). Displays glucuronidation activity toward several classes of xenobiotic substrates, including phenolic compounds (eugenol, 4-nitrophenol, 4-hydroxybiphenyl) and phenylpropanoids (naringenin, coumarins). Catalyzes the glucuronidation of monoterpenoid alcohols such as borneol, menthol and isomenthol, a class of natural compounds used in essential oils. The polypeptide is UDP-glucuronosyltransferase 2B15 (Homo sapiens (Human)).